Consider the following 859-residue polypeptide: Bifunctional levopimaradiene synthase, chloroplastic (859 aa).

The transit peptide at 1–70 (MALLSSSLSS…IACVGEDSLS (70 aa)) directs the protein to the chloroplast. Lysine 259 lines the substrate pocket. Positions 392 and 394 each coordinate Mg(2+). The short motif at 392-395 (DIDD) is the DXDD motif element. Lysine 479 is a substrate binding site. Mg(2+)-binding residues include aspartate 611, aspartate 615, asparagine 755, threonine 759, and glutamate 763. Residues 611–615 (DDLYD) carry the DDXXD motif motif.

The protein belongs to the terpene synthase family. Tpsd subfamily. The cofactor is Mg(2+).

It localises to the plastid. The protein resides in the chloroplast. The enzyme catalyses (2E,6E,10E)-geranylgeranyl diphosphate = (+)-copalyl diphosphate. It carries out the reaction (+)-copalyl diphosphate = abieta-8(14),12-diene + diphosphate. The protein operates within terpene metabolism; oleoresin biosynthesis. Functionally, involved in defensive oleoresin formation in conifers in response to insect attack or other injury. Involved in diterpene (C20) olefins biosynthesis. Bifunctional enzyme that catalyzes two sequential cyclizations of geranylgeranyl diphosphate (GGPP) to levopimaradiene. Levopimaradiene is the major products of the enzyme followed by abietadiene, neoabietadiene and palustradiene. This is Bifunctional levopimaradiene synthase, chloroplastic (TPS-LAS) from Picea abies (Norway spruce).